Reading from the N-terminus, the 384-residue chain is Dual-specificity RNA methyltransferase RlmN (384 aa).

E93 (proton acceptor) is an active-site residue. The Radical SAM core domain maps to 99–339 (EETRGTLCVS…TTIRKTRGDD (241 aa)). C106 and C344 are joined by a disulfide. C113, C117, and C120 together coordinate [4Fe-4S] cluster. S-adenosyl-L-methionine-binding positions include 170–171 (GE), S202, 224–226 (SLH), and N301. Residue C344 is the S-methylcysteine intermediate of the active site.

This sequence belongs to the radical SAM superfamily. RlmN family. Requires [4Fe-4S] cluster as cofactor.

It is found in the cytoplasm. The catalysed reaction is adenosine(2503) in 23S rRNA + 2 reduced [2Fe-2S]-[ferredoxin] + 2 S-adenosyl-L-methionine = 2-methyladenosine(2503) in 23S rRNA + 5'-deoxyadenosine + L-methionine + 2 oxidized [2Fe-2S]-[ferredoxin] + S-adenosyl-L-homocysteine. It catalyses the reaction adenosine(37) in tRNA + 2 reduced [2Fe-2S]-[ferredoxin] + 2 S-adenosyl-L-methionine = 2-methyladenosine(37) in tRNA + 5'-deoxyadenosine + L-methionine + 2 oxidized [2Fe-2S]-[ferredoxin] + S-adenosyl-L-homocysteine. Functionally, specifically methylates position 2 of adenine 2503 in 23S rRNA and position 2 of adenine 37 in tRNAs. m2A2503 modification seems to play a crucial role in the proofreading step occurring at the peptidyl transferase center and thus would serve to optimize ribosomal fidelity. This is Dual-specificity RNA methyltransferase RlmN from Cupriavidus necator (strain ATCC 17699 / DSM 428 / KCTC 22496 / NCIMB 10442 / H16 / Stanier 337) (Ralstonia eutropha).